The following is a 486-amino-acid chain: Galactose-3-O-sulfotransferase 4 (486 aa).

Over 1-18 (MGPLSPARTLRLWGPRSL) the chain is Cytoplasmic. Residues 19-39 (GVALGVFMTIGFALQLLGGPF) traverse the membrane as a helical; Signal-anchor for type II membrane protein segment. At 40-486 (QRRLPGLQLR…PLKTSRPLSP (447 aa)) the chain is on the lumenal side. N-linked (GlcNAc...) asparagine glycosylation occurs at Asn-374.

The protein belongs to the galactose-3-O-sulfotransferase family. It depends on Mn(2+) as a cofactor. As to expression, expressed mainly in placenta, thymus, testis, ovary, spinal cord, trachea and adrenal gland and at low levels in brain, lung, spleen, prostate, small intestine, colon, stomach thyroid and lymph node.

The protein resides in the golgi apparatus. The protein localises to the golgi stack membrane. The protein operates within protein modification; carbohydrate sulfation. Its function is as follows. Catalyzes the transfer of sulfate to beta-1,3-linked galactose residues in O-linked glycoproteins. Good substrates include asialofetuin, Gal-beta-1,3-GalNAc and Gal-beta-1,3 (GlcNAc-beta-1,6)GalNAc. This is Galactose-3-O-sulfotransferase 4 (GAL3ST4) from Homo sapiens (Human).